The following is a 234-amino-acid chain: UPF0502 protein BPSS1373 (234 aa).

It belongs to the UPF0502 family.

The chain is UPF0502 protein BPSS1373 from Burkholderia pseudomallei (strain K96243).